The sequence spans 118 residues: Large ribosomal subunit protein bL19 (118 aa).

It belongs to the bacterial ribosomal protein bL19 family.

In terms of biological role, this protein is located at the 30S-50S ribosomal subunit interface and may play a role in the structure and function of the aminoacyl-tRNA binding site. The protein is Large ribosomal subunit protein bL19 of Campylobacter lari (strain RM2100 / D67 / ATCC BAA-1060).